Consider the following 151-residue polypeptide: Probable flavodoxin 2 (151 aa).

Positions 4–144 constitute a Flavodoxin-like domain; that stretch reads ILLVYATMSG…ELINFGRQFA (141 aa). Residues 10-14 and 88-119 each bind FMN; these read TMSGN and VFGSGDTAYEFFCGAVDTLEAKIKERGGDIVL.

This sequence belongs to the flavodoxin family. The cofactor is FMN.

In terms of biological role, low-potential electron donor to a number of redox enzymes. The protein is Probable flavodoxin 2 (ykuP) of Bacillus subtilis (strain 168).